We begin with the raw amino-acid sequence, 262 residues long: Transcription factor of morphogenesis MCM1 (262 aa).

Disordered regions lie at residues 1 to 62 (MAIK…ERRK) and 140 to 262 (EEGL…QQYQ). Over residues 17–35 (NSHSTNNNNNSNNSNSNNN) the composition is skewed to low complexity. Residues 58–118 (KERRKIEIKF…GLVYTFTTPK (61 aa)) form the MADS-box domain. Over residues 150–170 (QSDGNTGDSPDQSPAPATNPN) the composition is skewed to polar residues. Composition is skewed to low complexity over residues 182-198 (QQQQQQQQQAQQQAQQQ), 224-239 (PQQQGQHQPGIPLQGG), and 249-262 (NIQNNNIPNQQQYQ).

As to quaternary structure, interacts with AHR1.

It localises to the nucleus. In terms of biological role, transcription factor that is recruited by AHR1 to the promoters of genes involved in biofilm formation, which include several key adhesion genes. Plays an important role in cell adhesion, hyphal growth and virulence. Implicated in the regulation of opaque-phase-specific gene expression. This Candida albicans (strain SC5314 / ATCC MYA-2876) (Yeast) protein is Transcription factor of morphogenesis MCM1 (MCM1).